Consider the following 128-residue polypeptide: Glycine cleavage system H protein 2 (128 aa).

The Lipoyl-binding domain maps to 24–105 (TVTVGISDHA…PYSAWIFKVK (82 aa)). Lys-65 is modified (N6-lipoyllysine).

Belongs to the GcvH family. As to quaternary structure, the glycine cleavage system is composed of four proteins: P, T, L and H. (R)-lipoate is required as a cofactor.

In terms of biological role, the glycine cleavage system catalyzes the degradation of glycine. The H protein shuttles the methylamine group of glycine from the P protein to the T protein. In Pseudomonas syringae pv. tomato (strain ATCC BAA-871 / DC3000), this protein is Glycine cleavage system H protein 2.